The sequence spans 243 residues: Geranylgeranylglyceryl phosphate synthase (243 aa).

Mg(2+)-binding residues include D22 and S51. Residues Y170–G176, G201–G202, and G223–T224 each bind sn-glycerol 1-phosphate.

It belongs to the GGGP/HepGP synthase family. Group II subfamily. Mg(2+) is required as a cofactor.

It is found in the cytoplasm. The enzyme catalyses sn-glycerol 1-phosphate + (2E,6E,10E)-geranylgeranyl diphosphate = sn-3-O-(geranylgeranyl)glycerol 1-phosphate + diphosphate. The protein operates within membrane lipid metabolism; glycerophospholipid metabolism. Prenyltransferase that catalyzes the transfer of the geranylgeranyl moiety of geranylgeranyl diphosphate (GGPP) to the C3 hydroxyl of sn-glycerol-1-phosphate (G1P). This reaction is the first ether-bond-formation step in the biosynthesis of archaeal membrane lipids. The chain is Geranylgeranylglyceryl phosphate synthase from Picrophilus torridus (strain ATCC 700027 / DSM 9790 / JCM 10055 / NBRC 100828 / KAW 2/3).